The chain runs to 104 residues: Large ribosomal subunit protein bL21 (104 aa).

This sequence belongs to the bacterial ribosomal protein bL21 family. Part of the 50S ribosomal subunit. Contacts protein L20.

This protein binds to 23S rRNA in the presence of protein L20. This Clostridium botulinum (strain 657 / Type Ba4) protein is Large ribosomal subunit protein bL21.